The chain runs to 203 residues: MSESEAPEPDQPAGAEEATGAKLFERWDVTGIEYDDPSTERYITVTPVEHTMGRHAGKQFQKSEISIVERLINRLMQTDENTGKKQQATRIVRNAFDLIAERTEESPVQVLVSAVENAAPREETVRLKYGGISVPQAVDVAPQRRVDQALKFIAEGTHSASFKSPTDAHEALAEQLTGAANYDVQTYAVNQKEEKERVAAAAR.

Positions 1 to 22 (MSESEAPEPDQPAGAEEATGAK) are disordered.

It belongs to the universal ribosomal protein uS7 family. In terms of assembly, part of the 30S ribosomal subunit.

Its function is as follows. One of the primary rRNA binding proteins, it binds directly to 16S rRNA where it nucleates assembly of the head domain of the 30S subunit. Is located at the subunit interface close to the decoding center. In Halococcus morrhuae (Micrococcus morrhuae), this protein is Small ribosomal subunit protein uS7.